A 450-amino-acid polypeptide reads, in one-letter code: MELLKLNSSVQGPGPGSGSSLCHPGVSLLNSSSAGNLSCEPPRIRGTGTRELELAIRITLYAVIFLMSIGGNMLIIVVLGLSRRLRTVTNAFLLSLAVSDLLLAVACMPFTLLPNLMGTFIFGTVICKAVSYLMGVSVSVSTLNLVAIALERYSAICRPLQARVWQTRSHAARVILATWLLSGLLMVPYPVYTVVQPVGPRVLQCMHRWPSARVRQTWSVLLLMLLFFIPGVVMAVAYGLISRELYLGLRFDGDNDSDTQSRVRNQGGLPGGTAPGPVHQNGGCRHVTVAGEDNDGCYVQLPRSRLEMTTLTTPTPGPGLASANQAKLLAKKRVVRMLLVIVLLFFLCWLPIYSANTWCAFDGPGAHRALSGAPISFIHLLSYASACVNPLVYCFMHRRFRQACLDTCARCCPRPPRARPRPLPDEDPPTPSIASLSRLSYTTISTLGPG.

Topologically, residues 1–57 (MELLKLNSSVQGPGPGSGSSLCHPGVSLLNSSSAGNLSCEPPRIRGTGTRELELAIR) are extracellular. Residues asparagine 7, asparagine 30, and asparagine 36 are each glycosylated (N-linked (GlcNAc...) asparagine). The helical transmembrane segment at 58 to 79 (ITLYAVIFLMSIGGNMLIIVVL) threads the bilayer. Over 80–87 (GLSRRLRT) the chain is Cytoplasmic. Residues 88-109 (VTNAFLLSLAVSDLLLAVACMP) traverse the membrane as a helical segment. Residues 110–131 (FTLLPNLMGTFIFGTVICKAVS) are Extracellular-facing. Cysteine 127 and cysteine 205 are disulfide-bonded. The chain crosses the membrane as a helical span at residues 132-150 (YLMGVSVSVSTLNLVAIAL). At 151–170 (ERYSAICRPLQARVWQTRSH) the chain is on the cytoplasmic side. A helical membrane pass occupies residues 171–189 (AARVILATWLLSGLLMVPY). Topologically, residues 190–219 (PVYTVVQPVGPRVLQCMHRWPSARVRQTWS) are extracellular. Residues 220 to 242 (VLLLMLLFFIPGVVMAVAYGLIS) form a helical membrane-spanning segment. Over 243–336 (RELYLGLRFD…KLLAKKRVVR (94 aa)) the chain is Cytoplasmic. Residues 258 to 277 (DTQSRVRNQGGLPGGTAPGP) are disordered. The chain crosses the membrane as a helical span at residues 337 to 358 (MLLVIVLLFFLCWLPIYSANTW). Residues 359–376 (CAFDGPGAHRALSGAPIS) lie on the Extracellular side of the membrane. Residues 377–397 (FIHLLSYASACVNPLVYCFMH) traverse the membrane as a helical segment. Residues 398–450 (RRFRQACLDTCARCCPRPPRARPRPLPDEDPPTPSIASLSRLSYTTISTLGPG) lie on the Cytoplasmic side of the membrane. Cysteine 411 is lipidated: S-palmitoyl cysteine.

This sequence belongs to the G-protein coupled receptor 1 family. In terms of tissue distribution, stomach and brain.

It is found in the cell membrane. In terms of biological role, receptor for gastrin and cholecystokinin. The CCK-B receptors occur throughout the central nervous system where they modulate anxiety, analgesia, arousal, and neuroleptic activity. This receptor mediates its action by association with G proteins that activate a phosphatidylinositol-calcium second messenger system. In Mastomys natalensis (African soft-furred rat), this protein is Gastrin/cholecystokinin type B receptor (CCKBR).